The sequence spans 124 residues: Large ribosomal subunit protein uL18 (124 aa).

This sequence belongs to the universal ribosomal protein uL18 family. In terms of assembly, part of the 50S ribosomal subunit; part of the 5S rRNA/L5/L18/L25 subcomplex. Contacts the 5S and 23S rRNAs.

Functionally, this is one of the proteins that bind and probably mediate the attachment of the 5S RNA into the large ribosomal subunit, where it forms part of the central protuberance. The chain is Large ribosomal subunit protein uL18 from Thermomicrobium roseum (strain ATCC 27502 / DSM 5159 / P-2).